The chain runs to 449 residues: Tol-Pal system protein TolB (449 aa).

The N-terminal stretch at 1–36 (MDCPNMPLHINRRQMLLSAATAAGALALGPARDAFG) is a signal peptide.

This sequence belongs to the TolB family. As to quaternary structure, the Tol-Pal system is composed of five core proteins: the inner membrane proteins TolA, TolQ and TolR, the periplasmic protein TolB and the outer membrane protein Pal. They form a network linking the inner and outer membranes and the peptidoglycan layer.

It is found in the periplasm. Functionally, part of the Tol-Pal system, which plays a role in outer membrane invagination during cell division and is important for maintaining outer membrane integrity. The protein is Tol-Pal system protein TolB of Rhodopseudomonas palustris (strain HaA2).